A 91-amino-acid chain; its full sequence is Small ribosomal subunit protein bS16 (91 aa).

The protein belongs to the bacterial ribosomal protein bS16 family.

The chain is Small ribosomal subunit protein bS16 from Exiguobacterium sibiricum (strain DSM 17290 / CCUG 55495 / CIP 109462 / JCM 13490 / 255-15).